Here is a 316-residue protein sequence, read N- to C-terminus: Porphobilinogen deaminase (316 aa).

S-(dipyrrolylmethanemethyl)cysteine is present on C249.

The protein belongs to the HMBS family. Monomer. Dipyrromethane serves as cofactor.

The catalysed reaction is 4 porphobilinogen + H2O = hydroxymethylbilane + 4 NH4(+). Its pathway is porphyrin-containing compound metabolism; protoporphyrin-IX biosynthesis; coproporphyrinogen-III from 5-aminolevulinate: step 2/4. Functionally, tetrapolymerization of the monopyrrole PBG into the hydroxymethylbilane pre-uroporphyrinogen in several discrete steps. This is Porphobilinogen deaminase from Nitrobacter hamburgensis (strain DSM 10229 / NCIMB 13809 / X14).